Consider the following 212-residue polypeptide: Imidazole glycerol phosphate synthase subunit HisH (212 aa).

Residues 2-212 (QTAIIDYGMG…LTMLKNFLNW (211 aa)) enclose the Glutamine amidotransferase type-1 domain. The Nucleophile role is filled by C85. Residues H194 and E196 contribute to the active site.

As to quaternary structure, heterodimer of HisH and HisF.

It localises to the cytoplasm. The enzyme catalyses 5-[(5-phospho-1-deoxy-D-ribulos-1-ylimino)methylamino]-1-(5-phospho-beta-D-ribosyl)imidazole-4-carboxamide + L-glutamine = D-erythro-1-(imidazol-4-yl)glycerol 3-phosphate + 5-amino-1-(5-phospho-beta-D-ribosyl)imidazole-4-carboxamide + L-glutamate + H(+). The catalysed reaction is L-glutamine + H2O = L-glutamate + NH4(+). It participates in amino-acid biosynthesis; L-histidine biosynthesis; L-histidine from 5-phospho-alpha-D-ribose 1-diphosphate: step 5/9. In terms of biological role, IGPS catalyzes the conversion of PRFAR and glutamine to IGP, AICAR and glutamate. The HisH subunit catalyzes the hydrolysis of glutamine to glutamate and ammonia as part of the synthesis of IGP and AICAR. The resulting ammonia molecule is channeled to the active site of HisF. This is Imidazole glycerol phosphate synthase subunit HisH (hisH) from Neisseria meningitidis serogroup B (strain ATCC BAA-335 / MC58).